Reading from the N-terminus, the 447-residue chain is Tol-Pal system protein TolB (447 aa).

A signal peptide spans 1–29 (MITMSRIRSLAAFAVFVILGVAAVLPAQA).

It belongs to the TolB family. In terms of assembly, the Tol-Pal system is composed of five core proteins: the inner membrane proteins TolA, TolQ and TolR, the periplasmic protein TolB and the outer membrane protein Pal. They form a network linking the inner and outer membranes and the peptidoglycan layer.

It is found in the periplasm. In terms of biological role, part of the Tol-Pal system, which plays a role in outer membrane invagination during cell division and is important for maintaining outer membrane integrity. The chain is Tol-Pal system protein TolB from Paramagnetospirillum magneticum (strain ATCC 700264 / AMB-1) (Magnetospirillum magneticum).